Reading from the N-terminus, the 869-residue chain is Facilitated trehalose transporter Tret1 (869 aa).

Disordered regions lie at residues 1–214 and 258–315; these read MSGR…QKAT and KESS…LIHR. The Cytoplasmic segment spans residues 1 to 404; the sequence is MSGRDNRGAG…VYRPTTNPIY (404 aa). A compositionally biased stretch (basic and acidic residues) spans 25-43; that stretch reads KLKEKLTRAGDDQGYHRVE. Low complexity-rich tracts occupy residues 44 to 57, 79 to 92, and 118 to 127; these read SNLS…SLDT, PQQQ…QQLR, and PFQQQQQRTP. Basic and acidic residues-rich tracts occupy residues 147–156 and 258–291; these read EIREHRDRQQ and KESS…KLDK. Ser-260, Ser-261, Ser-262, Ser-332, and Ser-334 each carry phosphoserine. The interval 336-368 is disordered; it reads EDFHTSRQHFQQQRSISTDSRKSRRPYEMDEMG. The span at 343–353 shows a compositional bias: polar residues; that stretch reads QHFQQQRSIST. Over residues 354–368 the composition is skewed to basic and acidic residues; sequence DSRKSRRPYEMDEMG. Residues 405–425 form a helical membrane-spanning segment; the sequence is IWTQVLAALSVSLGSLVVGFV. At 426-452 the chain is on the extracellular side; sequence SAYTSPALVSMTNRNMTSFEVTPQAAS. Asn-440 carries an N-linked (GlcNAc...) asparagine glycan. The helical transmembrane segment at 453-473 threads the bilayer; that stretch reads WVGGIMPLAGLAGGIAGGPFI. At 474 to 485 the chain is on the cytoplasmic side; sequence EYLGRRNTILAT. A helical transmembrane segment spans residues 486–506; it reads AIPFIVSSLLIACAVNVAMVL. The Extracellular segment spans residues 507-509; the sequence is AGR. The chain crosses the membrane as a helical span at residues 510–530; it reads FLAGFCVGIASLSLPVYLGET. Residues 531-536 lie on the Cytoplasmic side of the membrane; the sequence is VQPEVR. A helical transmembrane segment spans residues 537 to 557; the sequence is GTLGLLPTAFGNIGILLCFVA. The Extracellular portion of the chain corresponds to 558–564; sequence GTYMDWS. The helical transmembrane segment at 565 to 585 threads the bilayer; the sequence is MLAFLGAALPVPFLILMFLIP. Residues 586–654 are Cytoplasmic-facing; the sequence is ETPRWFVSRG…NLKPLSISLG (69 aa). Residues 655–675 traverse the membrane as a helical segment; that stretch reads LMFFQQLSGINAVIFYTVSIF. The Extracellular portion of the chain corresponds to 676–685; that stretch reads KDAGSTIDGN. The helical transmembrane segment at 686 to 706 threads the bilayer; that stretch reads LCTIIVGIVNFMATFIATLLI. Residues 707–712 are Cytoplasmic-facing; it reads DRAGRK. A helical membrane pass occupies residues 713–733; it reads ILLYVSNIAMIITLFVLGGFF. The Extracellular portion of the chain corresponds to 734-752; it reads YCKSHGQDVSQLGWLPLSC. Residues 753–773 traverse the membrane as a helical segment; it reads FVIYILGFSLGFGPIPWLMMG. Over 774–779 the chain is Cytoplasmic; that stretch reads EILPSK. The helical transmembrane segment at 780–800 threads the bilayer; that stretch reads IRGSAASVATAFNWSCTFVVT. Topologically, residues 801 to 813 are extracellular; that stretch reads KTFQDMIDFMGAH. The chain crosses the membrane as a helical span at residues 814-834; sequence GAFWLFGSICFIGLFFVILYV. The Cytoplasmic portion of the chain corresponds to 835 to 869; the sequence is PETQGKTLEDIERKMMGRVRRMSSVANMKPLAFNM. Phosphoserine is present on residues Ser-857 and Ser-858.

This sequence belongs to the major facilitator superfamily. Sugar transporter (TC 2.A.1.1) family. Trehalose transporter subfamily.

The protein localises to the cell membrane. Low-capacity facilitative transporter for trehalose. Does not transport maltose, sucrose or lactose. Mediates the bidirectional transfer of trehalose. Responsible for the transport of trehalose synthesized in the fat body and the incorporation of trehalose into other tissues that require a carbon source, thereby regulating trehalose levels in the hemolymph. The polypeptide is Facilitated trehalose transporter Tret1 (Drosophila persimilis (Fruit fly)).